Here is a 578-residue protein sequence, read N- to C-terminus: Proteasome-associated ATPase (578 aa).

Positions 35 to 84 (RHLTALEEQLGAARTRLAQVSAQNDRLATTLREARDQIVALKAEVDRLGQ) form a coiled coil. ATP is bound at residue 266–271 (GCGKTL). The tract at residues 577 to 578 (YL) is docks into pockets in the proteasome alpha-ring.

Belongs to the AAA ATPase family. In terms of assembly, homohexamer. Assembles into a hexameric ring structure that caps the 20S proteasome core. Strongly interacts with the prokaryotic ubiquitin-like protein Pup through a hydrophobic interface; the interacting region of ARC lies in its N-terminal coiled-coil domain. There is one Pup binding site per ARC hexamer ring. Upon ATP-binding, the C-terminus of ARC interacts with the alpha-rings of the proteasome core, possibly by binding to the intersubunit pockets.

It participates in protein degradation; proteasomal Pup-dependent pathway. Functionally, ATPase which is responsible for recognizing, binding, unfolding and translocation of pupylated proteins into the bacterial 20S proteasome core particle. May be essential for opening the gate of the 20S proteasome via an interaction with its C-terminus, thereby allowing substrate entry and access to the site of proteolysis. Thus, the C-termini of the proteasomal ATPase may function like a 'key in a lock' to induce gate opening and therefore regulate proteolysis. This Kineococcus radiotolerans (strain ATCC BAA-149 / DSM 14245 / SRS30216) protein is Proteasome-associated ATPase.